The chain runs to 422 residues: Phosphoribosylamine--glycine ligase (422 aa).

Residues 107-314 enclose the ATP-grasp domain; it reads KAFMQRHGIP…LFDVLDRAID (208 aa). Position 133–194 (133–194) interacts with ATP; the sequence is VDREGAPIVI…EEFLAGEEAS (62 aa). Mg(2+)-binding residues include Glu284 and Asn286.

The protein belongs to the GARS family. Mg(2+) is required as a cofactor. The cofactor is Mn(2+).

It catalyses the reaction 5-phospho-beta-D-ribosylamine + glycine + ATP = N(1)-(5-phospho-beta-D-ribosyl)glycinamide + ADP + phosphate + H(+). It participates in purine metabolism; IMP biosynthesis via de novo pathway; N(1)-(5-phospho-D-ribosyl)glycinamide from 5-phospho-alpha-D-ribose 1-diphosphate: step 2/2. This chain is Phosphoribosylamine--glycine ligase, found in Ralstonia nicotianae (strain ATCC BAA-1114 / GMI1000) (Ralstonia solanacearum).